Here is a 227-residue protein sequence, read N- to C-terminus: UPF0173 metal-dependent hydrolase Saci_1512 (227 aa).

It belongs to the UPF0173 family.

The protein is UPF0173 metal-dependent hydrolase Saci_1512 of Sulfolobus acidocaldarius (strain ATCC 33909 / DSM 639 / JCM 8929 / NBRC 15157 / NCIMB 11770).